The chain runs to 65 residues: UPF0434 protein BRADO0313 (65 aa).

The protein belongs to the UPF0434 family.

This chain is UPF0434 protein BRADO0313, found in Bradyrhizobium sp. (strain ORS 278).